Reading from the N-terminus, the 96-residue chain is ASNSD1 upstream open reading frame protein (96 aa).

A compositionally biased stretch (basic and acidic residues) spans 1–10 (MPSRGTRPED). The tract at residues 1–28 (MPSRGTRPEDSSVLIPTDNSTPHKEDLS) is disordered. Positions 23–96 (HKEDLSSKIK…ENLDKTKIKK (74 aa)) form a coiled coil.

As to quaternary structure, component of the PAQosome complex which is responsible for the biogenesis of several protein complexes and which consists of R2TP complex members RUVBL1, RUVBL2, RPAP3 and PIH1D1, URI complex members PFDN2, PFDN6, PDRG1, UXT and URI1 as well as ASDURF, POLR2E and DNAAF10/WDR92.

It is found in the cytoplasm. This chain is ASNSD1 upstream open reading frame protein, found in Homo sapiens (Human).